Here is a 350-residue protein sequence, read N- to C-terminus: Protein CONSERVED ONLY IN THE GREEN LINEAGE 160, chloroplastic (350 aa).

Residues 1–46 (MAILSYISATSTTPPIPQDQSPNSRLPTKIILPNKKPEKWSTGVAP) constitute a chloroplast transit peptide. Polar residues predominate over residues 7–26 (ISATSTTPPIPQDQSPNSRL). The segment at 7–58 (ISATSTTPPIPQDQSPNSRLPTKIILPNKKPEKWSTGVAPGEYGGPPTTTKL) is disordered. Residue S117 is modified to Phosphoserine. Transmembrane regions (helical) follow at residues 213 to 233 (KNKI…SAYI), 239 to 259 (IALS…MLGN), 276 to 296 (ANQP…RWNA), and 304 to 324 (FMHL…IATF).

It is found in the plastid. It localises to the chloroplast thylakoid membrane. Its function is as follows. Facilitates the assembly of the membrane proton channel of the chloroplastic F-type ATPase. Specifically required for the efficient assembly and integration of the CF(0) subunit c into the chloroplastic ATPase complex in the thylakoid membrane. The sequence is that of Protein CONSERVED ONLY IN THE GREEN LINEAGE 160, chloroplastic from Arabidopsis thaliana (Mouse-ear cress).